The chain runs to 479 residues: ATP synthase subunit beta (479 aa).

153-160 (GGAGVGKT) contributes to the ATP binding site.

The protein belongs to the ATPase alpha/beta chains family. In terms of assembly, F-type ATPases have 2 components, CF(1) - the catalytic core - and CF(0) - the membrane proton channel. CF(1) has five subunits: alpha(3), beta(3), gamma(1), delta(1), epsilon(1). CF(0) has three main subunits: a(1), b(2) and c(9-12). The alpha and beta chains form an alternating ring which encloses part of the gamma chain. CF(1) is attached to CF(0) by a central stalk formed by the gamma and epsilon chains, while a peripheral stalk is formed by the delta and b chains.

Its subcellular location is the cell membrane. It carries out the reaction ATP + H2O + 4 H(+)(in) = ADP + phosphate + 5 H(+)(out). In terms of biological role, produces ATP from ADP in the presence of a proton gradient across the membrane. The catalytic sites are hosted primarily by the beta subunits. This chain is ATP synthase subunit beta, found in Lactobacillus delbrueckii subsp. bulgaricus (strain ATCC BAA-365 / Lb-18).